Consider the following 228-residue polypeptide: UPF0173 metal-dependent hydrolase LMHCC_0991 (228 aa).

It belongs to the UPF0173 family.

The polypeptide is UPF0173 metal-dependent hydrolase LMHCC_0991 (Listeria monocytogenes serotype 4a (strain HCC23)).